We begin with the raw amino-acid sequence, 628 residues long: Eukaryotic peptide chain release factor GTP-binding subunit ERF3B (628 aa).

The span at Met-1 to Ser-10 shows a compositional bias: low complexity. 3 disordered regions span residues Met-1 to Leu-44, Ser-71 to Ser-124, and Leu-146 to Ser-191. One can recognise a tr-type G domain in the interval Lys-201–Arg-425. A G1 region spans residues Gly-210–Ser-217. Asp-213–Thr-218 contributes to the GTP binding site. Residues Gly-266–Glu-270 form a G2 region. The G3 stretch occupies residues Asp-287–Gly-290. Residues Asn-349 to Asp-352 and Ser-391 to Leu-393 contribute to the GTP site. Positions Asn-349–Asp-352 are G4. Positions Ser-391–Leu-393 are G5.

It belongs to the TRAFAC class translation factor GTPase superfamily. Classic translation factor GTPase family. ERF3 subfamily. In terms of assembly, component of the eRF1-eRF3-GTP ternary complex, composed of ETF1/ERF1 and ERF3 (GSPT1/ERF3A or GSPT2/ERF3B) and GTP. Component of the transient SURF (SMG1-UPF1-eRF1-eRF3) complex. Interacts with UPF1 and PABPC1.

It localises to the cytoplasm. The catalysed reaction is GTP + H2O = GDP + phosphate + H(+). In terms of biological role, GTPase component of the eRF1-eRF3-GTP ternary complex, a ternary complex that mediates translation termination in response to the termination codons UAA, UAG and UGA. GSPT2/ERF3B mediates ETF1/ERF1 delivery to stop codons: The eRF1-eRF3-GTP complex binds to a stop codon in the ribosomal A-site. GTP hydrolysis by GSPT2/ERF3B induces a conformational change that leads to its dissociation, permitting ETF1/ERF1 to accommodate fully in the A-site. Component of the transient SURF complex which recruits UPF1 to stalled ribosomes in the context of nonsense-mediated decay (NMD) of mRNAs containing premature stop codons. The protein is Eukaryotic peptide chain release factor GTP-binding subunit ERF3B (GSPT2) of Pongo abelii (Sumatran orangutan).